The chain runs to 666 residues: UvrABC system protein B (666 aa).

The Helicase ATP-binding domain occupies 28-171; the sequence is NNINQGIQRQ…YLHVGELIEF (144 aa). Residue 41-48 coordinates ATP; the sequence is GATGTGKT. Residues 94-117 carry the Beta-hairpin motif; the sequence is YFDYYQPEAYKPITDTYIEKDSVT. The Helicase C-terminal domain maps to 436-598; the sequence is QIDDLINELM…IIPKTIIKPI (163 aa). One can recognise a UVR domain in the interval 624 to 659; that stretch reads NQKIKELKKKMEEAAKKREYEVAAQYRDMIVELEAI.

This sequence belongs to the UvrB family. Forms a heterotetramer with UvrA during the search for lesions. Interacts with UvrC in an incision complex.

It is found in the cytoplasm. Its function is as follows. The UvrABC repair system catalyzes the recognition and processing of DNA lesions. A damage recognition complex composed of 2 UvrA and 2 UvrB subunits scans DNA for abnormalities. Upon binding of the UvrA(2)B(2) complex to a putative damaged site, the DNA wraps around one UvrB monomer. DNA wrap is dependent on ATP binding by UvrB and probably causes local melting of the DNA helix, facilitating insertion of UvrB beta-hairpin between the DNA strands. Then UvrB probes one DNA strand for the presence of a lesion. If a lesion is found the UvrA subunits dissociate and the UvrB-DNA preincision complex is formed. This complex is subsequently bound by UvrC and the second UvrB is released. If no lesion is found, the DNA wraps around the other UvrB subunit that will check the other stand for damage. In Ureaplasma parvum serovar 3 (strain ATCC 27815 / 27 / NCTC 11736), this protein is UvrABC system protein B.